The chain runs to 339 residues: Ketol-acid reductoisomerase (NADP(+)) (339 aa).

Positions 1-182 (MKVYYDADCD…GGGRSGIIET (182 aa)) constitute a KARI N-terminal Rossmann domain. NADP(+)-binding positions include 24-27 (YGSQ), arginine 48, serine 51, serine 53, and 83-86 (DEHQ). Histidine 108 is a catalytic residue. Residue glycine 134 participates in NADP(+) binding. Positions 183 to 328 (NFREECETDL…AKLRAMMPWI (146 aa)) constitute a KARI C-terminal knotted domain. Residues aspartate 191, glutamate 195, glutamate 227, and glutamate 231 each contribute to the Mg(2+) site. Serine 252 serves as a coordination point for substrate.

Belongs to the ketol-acid reductoisomerase family. The cofactor is Mg(2+).

The enzyme catalyses (2R)-2,3-dihydroxy-3-methylbutanoate + NADP(+) = (2S)-2-acetolactate + NADPH + H(+). It carries out the reaction (2R,3R)-2,3-dihydroxy-3-methylpentanoate + NADP(+) = (S)-2-ethyl-2-hydroxy-3-oxobutanoate + NADPH + H(+). Its pathway is amino-acid biosynthesis; L-isoleucine biosynthesis; L-isoleucine from 2-oxobutanoate: step 2/4. The protein operates within amino-acid biosynthesis; L-valine biosynthesis; L-valine from pyruvate: step 2/4. Functionally, involved in the biosynthesis of branched-chain amino acids (BCAA). Catalyzes an alkyl-migration followed by a ketol-acid reduction of (S)-2-acetolactate (S2AL) to yield (R)-2,3-dihydroxy-isovalerate. In the isomerase reaction, S2AL is rearranged via a Mg-dependent methyl migration to produce 3-hydroxy-3-methyl-2-ketobutyrate (HMKB). In the reductase reaction, this 2-ketoacid undergoes a metal-dependent reduction by NADPH to yield (R)-2,3-dihydroxy-isovalerate. The polypeptide is Ketol-acid reductoisomerase (NADP(+)) (Novosphingobium aromaticivorans (strain ATCC 700278 / DSM 12444 / CCUG 56034 / CIP 105152 / NBRC 16084 / F199)).